An 81-amino-acid chain; its full sequence is Neuronatin (81 aa).

It belongs to the neuronatin family.

May participate in the maintenance of segment identity in the hindbrain and pituitary development, and maturation or maintenance of the overall structure of the nervous system. May function as a regulatory subunit of ion channels. The sequence is that of Neuronatin (NNAT) from Mesocricetus auratus (Golden hamster).